Here is a 254-residue protein sequence, read N- to C-terminus: tRNA uridine(34) hydroxylase (254 aa).

The Rhodanese domain maps to 123-217 (QDPNVILLDT…YLESIPESES (95 aa)). Cysteine 177 acts as the Cysteine persulfide intermediate in catalysis.

Belongs to the TrhO family.

It catalyses the reaction uridine(34) in tRNA + AH2 + O2 = 5-hydroxyuridine(34) in tRNA + A + H2O. Catalyzes oxygen-dependent 5-hydroxyuridine (ho5U) modification at position 34 in tRNAs. The protein is tRNA uridine(34) hydroxylase of Legionella pneumophila (strain Corby).